A 189-amino-acid polypeptide reads, in one-letter code: MATNYSANQYEKAYLPTYLQNWSPARPTKEKIAAHEGYTQIIANDRGHLLPSVPRSKASPWGSFMGTWQMPLKIPPAKVTLTARTTTAADNLTKWIHKNPDLLNACNGLRPEISGKPFDPDSQTKQKKSVTKTVQQAPNPTIIPSSPVIQGDNPDEPQSSHPSAGHTPGPQTPVNSPNNPPPSPCKSTK.

The interval 112–189 is disordered; sequence EISGKPFDPD…PPPSPCKSTK (78 aa). Over residues 137 to 148 the composition is skewed to polar residues; that stretch reads APNPTIIPSSPV. Pro residues predominate over residues 178 to 189; it reads NNPPPSPCKSTK.

It belongs to the Flattop family. As to quaternary structure, microtubule inner protein component of sperm flagellar doublet microtubules. Interacts with DLG3. In terms of tissue distribution, expressed in mono- and multiciliated tissues during planar cell polarity acquisition.

The protein resides in the cytoplasm. It localises to the cytoskeleton. It is found in the cilium basal body. The protein localises to the cilium axoneme. Its subcellular location is the flagellum axoneme. The protein resides in the apical cell membrane. Its function is as follows. Microtubule inner protein (MIP) part of the dynein-decorated doublet microtubules (DMTs) in cilia axoneme. Acts as a regulator of cilium basal body docking and positioning in mono- and multiciliated cells. Regulates basal body docking and cilia formation in multiciliated lung cells. Regulates kinocilium positioning and stereocilia bundle morphogenesis in the inner ear. This chain is Protein Flattop, found in Mus musculus (Mouse).